Consider the following 459-residue polypeptide: ATP-dependent protease ATPase subunit HslU (459 aa).

Residues Val26, 68–73 (GVGKTE), Asp271, Glu337, and Arg409 each bind ATP.

Belongs to the ClpX chaperone family. HslU subfamily. In terms of assembly, a double ring-shaped homohexamer of HslV is capped on each side by a ring-shaped HslU homohexamer. The assembly of the HslU/HslV complex is dependent on binding of ATP.

The protein resides in the cytoplasm. In terms of biological role, ATPase subunit of a proteasome-like degradation complex; this subunit has chaperone activity. The binding of ATP and its subsequent hydrolysis by HslU are essential for unfolding of protein substrates subsequently hydrolyzed by HslV. HslU recognizes the N-terminal part of its protein substrates and unfolds these before they are guided to HslV for hydrolysis. This Xylella fastidiosa (strain M23) protein is ATP-dependent protease ATPase subunit HslU.